Reading from the N-terminus, the 1040-residue chain is Regulator of telomere elongation helicase 1 homolog (1040 aa).

The Helicase ATP-binding domain maps to 52-355 (RGINVEFPFE…KGLLLKLQEL (304 aa)). 87-94 (SPTGTGKT) serves as a coordination point for ATP. The segment at 117 to 137 (RKNSAIPWSDSDEPLSQSGGG) is disordered. The [4Fe-4S] cluster site is built by C181, C202, C210, and C246. The DEAH box signature appears at 289–292 (DEAH). Positions 926-949 (KVPESQGSASSSVLTAKGNGGGDK) are disordered. Over residues 930-939 (SQGSASSSVL) the composition is skewed to polar residues. Residues 992–999 (QSIVQLFC) carry the PIP-box; degenerate motif.

The protein belongs to the helicase family. RAD3/XPD subfamily.

The protein localises to the nucleus. The enzyme catalyses ATP + H2O = ADP + phosphate + H(+). A probable ATP-dependent DNA helicase implicated in DNA replication, DNA repair and the maintenance of genomic stability. Acts as an anti-recombinase to counteract toxic recombination and limit crossover during meiosis. Regulates meiotic recombination and crossover homeostasis by physically dissociating strand invasion events and thereby promotes noncrossover repair by meiotic synthesis dependent strand annealing (SDSA) as well as disassembly of D loop recombination intermediates. Also plays a role in preserving the stability of 45S rDNA repeats. The chain is Regulator of telomere elongation helicase 1 homolog from Arabidopsis thaliana (Mouse-ear cress).